Reading from the N-terminus, the 473-residue chain is Protein nucleotidyltransferase YdiU (473 aa).

ATP contacts are provided by glycine 79, glycine 81, arginine 82, lysine 102, aspartate 114, glycine 115, arginine 165, and arginine 172. Catalysis depends on aspartate 241, which acts as the Proton acceptor. Residues asparagine 242 and aspartate 251 each coordinate Mg(2+). Aspartate 251 provides a ligand contact to ATP.

The protein belongs to the SELO family. The cofactor is Mg(2+). It depends on Mn(2+) as a cofactor.

It carries out the reaction L-seryl-[protein] + ATP = 3-O-(5'-adenylyl)-L-seryl-[protein] + diphosphate. The enzyme catalyses L-threonyl-[protein] + ATP = 3-O-(5'-adenylyl)-L-threonyl-[protein] + diphosphate. The catalysed reaction is L-tyrosyl-[protein] + ATP = O-(5'-adenylyl)-L-tyrosyl-[protein] + diphosphate. It catalyses the reaction L-histidyl-[protein] + UTP = N(tele)-(5'-uridylyl)-L-histidyl-[protein] + diphosphate. It carries out the reaction L-seryl-[protein] + UTP = O-(5'-uridylyl)-L-seryl-[protein] + diphosphate. The enzyme catalyses L-tyrosyl-[protein] + UTP = O-(5'-uridylyl)-L-tyrosyl-[protein] + diphosphate. Functionally, nucleotidyltransferase involved in the post-translational modification of proteins. It can catalyze the addition of adenosine monophosphate (AMP) or uridine monophosphate (UMP) to a protein, resulting in modifications known as AMPylation and UMPylation. The protein is Protein nucleotidyltransferase YdiU of Marinomonas sp. (strain MWYL1).